Here is a 601-residue protein sequence, read N- to C-terminus: ATP-dependent lipid A-core flippase (601 aa).

Helical transmembrane passes span isoleucine 27–leucine 47, leucine 83–leucine 103, leucine 174–valine 194, and proline 267–leucine 287. The 292-residue stretch at leucine 31–lysine 322 folds into the ABC transmembrane type-1 domain. Positions leucine 354 to methionine 590 constitute an ABC transporter domain. Position 388–395 (glycine 388–serine 395) interacts with ATP.

It belongs to the ABC transporter superfamily. Lipid exporter (TC 3.A.1.106) family. In terms of assembly, homodimer.

Its subcellular location is the cell inner membrane. The enzyme catalyses ATP + H2O + lipid A-core oligosaccharideSide 1 = ADP + phosphate + lipid A-core oligosaccharideSide 2.. Involved in lipopolysaccharide (LPS) biosynthesis. Translocates lipid A-core from the inner to the outer leaflet of the inner membrane. Transmembrane domains (TMD) form a pore in the inner membrane and the ATP-binding domain (NBD) is responsible for energy generation. The sequence is that of ATP-dependent lipid A-core flippase from Pseudomonas fluorescens (strain ATCC BAA-477 / NRRL B-23932 / Pf-5).